Consider the following 122-residue polypeptide: Protein POLR1D, isoform 2 (122 aa).

Residue Met-1 is modified to N-acetylmethionine. Positions 48–122 (INTIKNTLPS…DKYEKRSNRR (75 aa)) are disordered. Over residues 57–83 (SHKEQDHEQKEGDKEPAKSQAQKEENP) the composition is skewed to basic and acidic residues. Over residues 84-96 (KKHRSHPYKHSFR) the composition is skewed to basic residues. Ser-104 is modified (phosphoserine). Over residues 110–122 (SSQDKYEKRSNRR) the composition is skewed to basic and acidic residues.

The chain is Protein POLR1D, isoform 2 (POLR1D) from Homo sapiens (Human).